The chain runs to 101 residues: Putative pterin-4-alpha-carbinolamine dehydratase (101 aa).

It belongs to the pterin-4-alpha-carbinolamine dehydratase family.

The catalysed reaction is (4aS,6R)-4a-hydroxy-L-erythro-5,6,7,8-tetrahydrobiopterin = (6R)-L-erythro-6,7-dihydrobiopterin + H2O. This Nitrobacter winogradskyi (strain ATCC 25391 / DSM 10237 / CIP 104748 / NCIMB 11846 / Nb-255) protein is Putative pterin-4-alpha-carbinolamine dehydratase.